The chain runs to 177 residues: Large ribosomal subunit protein uL6 (177 aa).

Belongs to the universal ribosomal protein uL6 family. Part of the 50S ribosomal subunit.

In terms of biological role, this protein binds to the 23S rRNA, and is important in its secondary structure. It is located near the subunit interface in the base of the L7/L12 stalk, and near the tRNA binding site of the peptidyltransferase center. The chain is Large ribosomal subunit protein uL6 from Rickettsia massiliae (strain Mtu5).